Consider the following 396-residue polypeptide: MVLEKVFLPEGVQDLLMKDCHHRRLIEGRLMEEWVKQGYMEVSSPTLEYYDLFRQGEQMLRGNKMFKLIDAKGDLLVLRPDGTLPIARMVATKMKDMVYPLKICYIQDIFRLDQEQAGKQREFRQAGVEVFGVESYEADGQVIITAIESLKALGLSDFQIEIGQTKILQSILDSMAVTTDEKDEIIMLIHNKNFSTLESLLEKLDIDPKTRLILKEIPNLFGTPQGVMESVAALPINDNIKRALEELQQICHMIQAYGFGQYISVDLGMTAPLGYYTGIIFKGFTKDLGTILCSGGRYDRLLMSFGMNCPATGFALLIDQIRKALHLGQQKKKESGPPYYLLVSHEGRHEEVAKEATRLKKTGCIVEVSLLKDPQAIDIYAKRRGVDKIIEIGEKK.

It belongs to the class-II aminoacyl-tRNA synthetase family. HisZ subfamily. In terms of assembly, heteromultimer composed of HisG and HisZ subunits.

It localises to the cytoplasm. The protein operates within amino-acid biosynthesis; L-histidine biosynthesis; L-histidine from 5-phospho-alpha-D-ribose 1-diphosphate: step 1/9. Required for the first step of histidine biosynthesis. May allow the feedback regulation of ATP phosphoribosyltransferase activity by histidine. The protein is ATP phosphoribosyltransferase regulatory subunit of Alkaliphilus metalliredigens (strain QYMF).